A 265-amino-acid chain; its full sequence is Type III pantothenate kinase (265 aa).

ATP is bound at residue 6-13; sequence DVGNTHTV. Residue 112-115 coordinates substrate; that stretch reads GADR. Residue aspartate 114 is the Proton acceptor of the active site. Aspartate 134 contacts K(+). Threonine 137 is a binding site for ATP. Threonine 189 contributes to the substrate binding site.

Belongs to the type III pantothenate kinase family. In terms of assembly, homodimer. NH4(+) is required as a cofactor. Requires K(+) as cofactor.

It is found in the cytoplasm. It carries out the reaction (R)-pantothenate + ATP = (R)-4'-phosphopantothenate + ADP + H(+). The protein operates within cofactor biosynthesis; coenzyme A biosynthesis; CoA from (R)-pantothenate: step 1/5. Functionally, catalyzes the phosphorylation of pantothenate (Pan), the first step in CoA biosynthesis. The protein is Type III pantothenate kinase of Streptomyces coelicolor (strain ATCC BAA-471 / A3(2) / M145).